Reading from the N-terminus, the 429-residue chain is Adenosylhomocysteinase (429 aa).

The substrate site is built by threonine 64, aspartate 136, and glutamate 161. Residue 162 to 164 (TTT) participates in NAD(+) binding. The substrate site is built by lysine 191 and aspartate 195. NAD(+) contacts are provided by residues asparagine 196, 225–230 (GYGWCG), glutamate 248, asparagine 283, 304–306 (SGH), and asparagine 351.

It belongs to the adenosylhomocysteinase family. Requires NAD(+) as cofactor.

The protein resides in the cytoplasm. It carries out the reaction S-adenosyl-L-homocysteine + H2O = L-homocysteine + adenosine. Its pathway is amino-acid biosynthesis; L-homocysteine biosynthesis; L-homocysteine from S-adenosyl-L-homocysteine: step 1/1. In terms of biological role, may play a key role in the regulation of the intracellular concentration of adenosylhomocysteine. The sequence is that of Adenosylhomocysteinase from Thermosynechococcus vestitus (strain NIES-2133 / IAM M-273 / BP-1).